The chain runs to 352 residues: MNTIVFNKLSGAVLFEDGGASERERGGRPYSGVLDSPHARPEVGIPDGPPLKDNLGLRHRRTGARQNGGKVRHKRQALQDMARPLKQWLYKHRDNPYPTKTEKILLALGSQMTLVQVSNWFANARRRLKNTVRQPDLSWALRIKLYNKYVQGNAERLSVSSDDSCSEDGENPPRTHMNEGGYNTPVHHPVIKSENSVIKAGVRPESRASEDYVAPPKYKSSLLNRYLNDSLRHVMATNTTMMGKTRQRNHSGSFSSNEFEEELVSPSSSETEGNFVYRTDTLENGSNKGESAANRKGPSKDDTYWKEINAAMALTNLAQGKDKLQGTTSCIIQKSSHIAEVKTVKVPLVQQF.

Positions 19–54 are disordered; it reads GASERERGGRPYSGVLDSPHARPEVGIPDGPPLKDN. Positions 71–132 form a DNA-binding region, homeobox; TALE-type; that stretch reads VRHKRQALQD…NARRRLKNTV (62 aa). Disordered stretches follow at residues 159–189 and 245–301; these read VSSDDSCSEDGENPPRTHMNEGGYNTPVHHP and TRQR…PSKD.

It belongs to the TALE/IRO homeobox family.

It localises to the nucleus. Functionally, may act as a morphogenetic regulator of cell adhesion. This chain is Homeobox protein Mohawk (MKX), found in Homo sapiens (Human).